Reading from the N-terminus, the 380-residue chain is Elongation factor Ts, mitochondrial (380 aa).

It belongs to the EF-Ts family.

The protein resides in the mitochondrion. Its function is as follows. Associates with the EF-Tu.GDP complex and induces the exchange of GDP to GTP. It remains bound to the aminoacyl-tRNA.EF-Tu.GTP complex up to the GTP hydrolysis stage on the ribosome. This chain is Elongation factor Ts, mitochondrial, found in Plasmodium chabaudi chabaudi.